Here is a 31-residue protein sequence, read N- to C-terminus: Cytochrome b6-f complex subunit 6 (31 aa).

Residues 4 to 26 (LTSYFGFLLAALTITSALFIGLS) traverse the membrane as a helical segment.

It belongs to the PetL family. The 4 large subunits of the cytochrome b6-f complex are cytochrome b6, subunit IV (17 kDa polypeptide, PetD), cytochrome f and the Rieske protein, while the 4 small subunits are PetG, PetL, PetM and PetN. The complex functions as a dimer.

It is found in the plastid. Its subcellular location is the chloroplast thylakoid membrane. Functionally, component of the cytochrome b6-f complex, which mediates electron transfer between photosystem II (PSII) and photosystem I (PSI), cyclic electron flow around PSI, and state transitions. PetL is important for photoautotrophic growth as well as for electron transfer efficiency and stability of the cytochrome b6-f complex. The sequence is that of Cytochrome b6-f complex subunit 6 from Aethionema grandiflorum (Persian stone-cress).